A 186-amino-acid polypeptide reads, in one-letter code: Small ribosomal subunit protein uS4 (186 aa).

The region spanning Arg106–Ile170 is the S4 RNA-binding domain. Residues Glu151–Glu186 form a disordered region. The segment covering Leu163–Ser178 has biased composition (basic and acidic residues).

This sequence belongs to the universal ribosomal protein uS4 family. In terms of assembly, part of the 30S ribosomal subunit. Contacts protein S5. The interaction surface between S4 and S5 is involved in control of translational fidelity.

In terms of biological role, one of the primary rRNA binding proteins, it binds directly to 16S rRNA where it nucleates assembly of the body of the 30S subunit. With S5 and S12 plays an important role in translational accuracy. The protein is Small ribosomal subunit protein uS4 of Methanopyrus kandleri (strain AV19 / DSM 6324 / JCM 9639 / NBRC 100938).